The primary structure comprises 374 residues: Chaperone protein DnaJ (374 aa).

Residues 5–70 (DYYEVLGISR…SKRAAYDQFG (66 aa)) form the J domain. A CR-type zinc finger spans residues 129 to 207 (GKTVKINIPG…CHGQGRVRQE (79 aa)). Zn(2+) is bound by residues C142, C145, C159, C162, C181, C184, C195, and C198. CXXCXGXG motif repeat units lie at residues 142 to 149 (CEACDGSG), 159 to 166 (CGTCQGMG), 181 to 188 (CPTCRGSG), and 195 to 202 (CKSCHGQG). Residues 216 to 238 (PGVDTGDRIRLSGEGEMGVDGGP) form a disordered region.

The protein belongs to the DnaJ family. Homodimer. Zn(2+) serves as cofactor.

It is found in the cytoplasm. Its function is as follows. Participates actively in the response to hyperosmotic and heat shock by preventing the aggregation of stress-denatured proteins and by disaggregating proteins, also in an autonomous, DnaK-independent fashion. Unfolded proteins bind initially to DnaJ; upon interaction with the DnaJ-bound protein, DnaK hydrolyzes its bound ATP, resulting in the formation of a stable complex. GrpE releases ADP from DnaK; ATP binding to DnaK triggers the release of the substrate protein, thus completing the reaction cycle. Several rounds of ATP-dependent interactions between DnaJ, DnaK and GrpE are required for fully efficient folding. Also involved, together with DnaK and GrpE, in the DNA replication of plasmids through activation of initiation proteins. In Marinobacter nauticus (strain ATCC 700491 / DSM 11845 / VT8) (Marinobacter aquaeolei), this protein is Chaperone protein DnaJ.